The chain runs to 304 residues: MNRLAVEIPGLSLKNPIMPASGCFGFGQEYSKYYDLNELGAIMAKAVTPEPRLGNPTPRVAETASGMLNAIGLQNPGLEHVLAHELPFLEQFETPIIANVAGATEDDYVQVCARIGESKAVKAIELNISCPNVKHGGIAFGTDPEVAHRLTKAVKNVATVPVYVKLSPNVADIVSIAQAIEAAGADGLTMINTLLGMRIDLKTRKPIIANGTGGLSGPAIKPVAIRMIHQVRAVSNIPIIGMGGVQTVDDVLEFLIAGADAVAVGTMNFTDPFICPKLISELPKRMDELGISSLQELKKERANQ.

FMN contacts are provided by residues Ser21 and 45–46 (KA). Substrate-binding positions include Lys45 and 69–73 (NAIGL). Residues Asn99 and Asn127 each coordinate FMN. Position 127 (Asn127) interacts with substrate. Cys130 serves as the catalytic Nucleophile. Lys165 and Ile191 together coordinate FMN. 192–193 (NT) contacts substrate. FMN is bound by residues Gly217, 243–244 (GG), and 265–266 (GT).

It belongs to the dihydroorotate dehydrogenase family. Type 1 subfamily. Heterotetramer of 2 PyrK and 2 PyrD type B subunits. FMN is required as a cofactor.

It localises to the cytoplasm. It carries out the reaction (S)-dihydroorotate + NAD(+) = orotate + NADH + H(+). Its pathway is pyrimidine metabolism; UMP biosynthesis via de novo pathway; orotate from (S)-dihydroorotate (NAD(+) route): step 1/1. Its function is as follows. Catalyzes the conversion of dihydroorotate to orotate with NAD(+) as electron acceptor. The protein is Dihydroorotate dehydrogenase B (NAD(+)), catalytic subunit (pyrD) of Listeria monocytogenes serotype 4a (strain HCC23).